We begin with the raw amino-acid sequence, 201 residues long: Putative pseudouridine methyltransferase (201 aa).

2 residues coordinate S-adenosyl-L-methionine: Met-132 and Cys-186.

Belongs to the methyltransferase superfamily. TrmY family.

It localises to the cytoplasm. This chain is Putative pseudouridine methyltransferase, found in Vibrio cholerae serotype O1 (strain ATCC 39315 / El Tor Inaba N16961).